The primary structure comprises 410 residues: Argininosuccinate synthase (410 aa).

10–18 (AYSGGLDTS) serves as a coordination point for ATP. L-citrulline-binding residues include tyrosine 88 and serine 93. An ATP-binding site is contributed by glycine 118. L-aspartate contacts are provided by threonine 120, asparagine 124, and aspartate 125. L-citrulline is bound at residue asparagine 124. L-citrulline contacts are provided by arginine 128, serine 177, serine 186, glutamate 262, and tyrosine 274.

The protein belongs to the argininosuccinate synthase family. Type 1 subfamily. Homotetramer.

The protein localises to the cytoplasm. It catalyses the reaction L-citrulline + L-aspartate + ATP = 2-(N(omega)-L-arginino)succinate + AMP + diphosphate + H(+). The protein operates within amino-acid biosynthesis; L-arginine biosynthesis; L-arginine from L-ornithine and carbamoyl phosphate: step 2/3. The chain is Argininosuccinate synthase from Thermoanaerobacter sp. (strain X514).